Reading from the N-terminus, the 545-residue chain is MTILTQSTTWQALAAHSHQIPHMRELFAGDPARFSNMSLSTCGLFLDYSKNRATPETLNLLQTLAQEAKLDAKIKAMFAGDIINTTEKRAVLHTALRSTAEQSIVAEGQDIVPEVQQTLNKMQQFVTSVTSGQWKGFTGKAITDIVSIGIGGSFLGPKIVSQALRPYWITGLNCHFVANVDGTSISEKLKLLDPETTLFIMSSKSFGTQETLTNTLTAKAWFLAKGGSQSDVAKHFVAVTSNVAKATDFGIDADNIFPMWDWVGGRYSLWSAIGLPIALLIGMDNFRSLLKGAHQMDTHFANAPLAENMPVIMGLFSLWYGNFFNAQSHVVLTYDHYLRGLPAYFQQLDMESNGKSVTLNGTHVDYSTGPVIWGGEGTNGQHAYHQLLHQGTALIPADFIMPLQSHNPIGEHHDQLASNCFGQTQALMQGRTLDEALAELSKSSLSDEEKLLIAKHKVMPGNKPSNTLLMDKLTPETLGALIALYEHRTFVQGAIWDINSFDQWGVELGKSLGNDVLARIGAEQDATALDASSNGLINLYRQGKI.

Glu-351 acts as the Proton donor in catalysis. Catalysis depends on residues His-382 and Lys-510.

The protein belongs to the GPI family.

Its subcellular location is the cytoplasm. The enzyme catalyses alpha-D-glucose 6-phosphate = beta-D-fructose 6-phosphate. It participates in carbohydrate biosynthesis; gluconeogenesis. Its pathway is carbohydrate degradation; glycolysis; D-glyceraldehyde 3-phosphate and glycerone phosphate from D-glucose: step 2/4. Catalyzes the reversible isomerization of glucose-6-phosphate to fructose-6-phosphate. This Shewanella sp. (strain MR-4) protein is Glucose-6-phosphate isomerase.